Consider the following 1103-residue polypeptide: MPGVIMDEPNVGGHPKGPSVPDSSRNGIPPLSGSDGAHGVSSAHNDGANRLNGSAKGIDGYKQNVDSSTTKIDFVGLRQPPELPHITQGFFPFSKLVNRSVQQCWNELSELITELAEVQVPPQDSGPLPGAPNGKPLGNQSEQNLQKKLRLLDFAHSKRAEFIKLLVLSQWSRQAADVSRLIDIQNFIRIRHQAYAGALQCIGDMKRDLVQAQVGNPDLKTALEVLAKGKVVSMPTLGYKPPRPLTAKGALKRLQKINRLISARLVLSDSVPTPFQTYRVHDGRVTFIVPDEFELDLSIGAEDETSQFYFVDIRFLFTPSSPIPKGRIFNELDMRINDTLRTKGLAGCFDLLHGLVLTTKINALFKQAAELARGLWSDTLRVELLHRTLVLQYWTLRPGPKSWLEIGIKSGRRSSENSINGLPSIGLRWIRDGQEVDSRDIEFDSKNLSMECILRSVIALHTSHILSSAFEKLSKHSLFSTGALSLRGRLSRTEPGACQLDVQLTRSRHLRVSVEPMSGTSILSTTPSTLERSDVDRNTDKPFADEIVSRVARLRCISAIEEVESNAKLLGFQVVNPRSLKLDFRRHFPANILRFSFFWHRSWERNWVLAATSSMDGDSWWVVQLQPAVPSESALPFDANSGISAPRSAQIVCNTFFPAPQHNMKSPFADMGHSLYGILTMQANARYLADLQSISFHPPLPQLVIEASLQVPDILIHYQALKLPRAFQVAMPAELARRSFIKDTIRLAFSGVDPHEKAAVLVAYGELLSPPNDVGALVSKQDRSLVLHHGGNKFAIRLLTAAGRSAMCELLESLQRLECALSILETLRRKKMQPQSLSLSRVGFLYGPRAELSANIDINLTTSSTHTIIDPLHLVTQEKPLFQLRLGIAFDYPNPHRRMQGSFTSLLNNAGATSSLGTVTGLLSVTLPLMQALDGLMANPSHKDPLRVQVIARNAKTFQIHYPMQKVRFQLLITQRPNSLVWVLREAGGLQGRSSEDQLKSRLKERLYHSKGDGWQGLENGVVATIDKVGNLLTELDKCFSGLDDIPILNQSPLETKPIPSKPTMGNTEPAASGNTVQNARLENKSPQKAAATHSNADVITID.

Disordered regions lie at residues 1–63 (MPGV…GYKQ), 120–140 (VPPQDSGPLPGAPNGKPLGNQ), and 1054–1103 (LETK…ITID). Residues 1073–1103 (SGNTVQNARLENKSPQKAAATHSNADVITID) show a composition bias toward polar residues.

Belongs to the Mediator complex subunit 14 family. As to quaternary structure, component of the Mediator complex.

The protein localises to the nucleus. Its function is as follows. Component of the Mediator complex, a coactivator involved in the regulated transcription of nearly all RNA polymerase II-dependent genes. Mediator functions as a bridge to convey information from gene-specific regulatory proteins to the basal RNA polymerase II transcription machinery. Mediator is recruited to promoters by direct interactions with regulatory proteins and serves as a scaffold for the assembly of a functional preinitiation complex with RNA polymerase II and the general transcription factors. In Aspergillus terreus (strain NIH 2624 / FGSC A1156), this protein is Mediator of RNA polymerase II transcription subunit 14 (rgr1).